Reading from the N-terminus, the 346-residue chain is Phosphoribosylformylglycinamidine cyclo-ligase (346 aa).

Belongs to the AIR synthase family.

The protein resides in the cytoplasm. The enzyme catalyses 2-formamido-N(1)-(5-O-phospho-beta-D-ribosyl)acetamidine + ATP = 5-amino-1-(5-phospho-beta-D-ribosyl)imidazole + ADP + phosphate + H(+). It participates in purine metabolism; IMP biosynthesis via de novo pathway; 5-amino-1-(5-phospho-D-ribosyl)imidazole from N(2)-formyl-N(1)-(5-phospho-D-ribosyl)glycinamide: step 2/2. This Bacillus cereus (strain AH187) protein is Phosphoribosylformylglycinamidine cyclo-ligase.